A 181-amino-acid polypeptide reads, in one-letter code: Isopentenyl-diphosphate Delta-isomerase (181 aa).

Mn(2+)-binding residues include His-25 and His-32. The Nudix hydrolase domain occupies 30 to 164 (PLHLAFSCWL…PWAFSPWMVM (135 aa)). Cys-67 is an active-site residue. Cys-67 is a binding site for Mg(2+). His-69 provides a ligand contact to Mn(2+). Glu-87 is a binding site for Mg(2+). Residues Glu-114 and Glu-116 each coordinate Mn(2+). Glu-116 is a catalytic residue.

This sequence belongs to the IPP isomerase type 1 family. Homodimer. Mg(2+) is required as a cofactor. Mn(2+) serves as cofactor.

It is found in the cytoplasm. The catalysed reaction is isopentenyl diphosphate = dimethylallyl diphosphate. Its pathway is isoprenoid biosynthesis; dimethylallyl diphosphate biosynthesis; dimethylallyl diphosphate from isopentenyl diphosphate: step 1/1. Its function is as follows. Catalyzes the 1,3-allylic rearrangement of the homoallylic substrate isopentenyl (IPP) to its highly electrophilic allylic isomer, dimethylallyl diphosphate (DMAPP). In Salmonella choleraesuis (strain SC-B67), this protein is Isopentenyl-diphosphate Delta-isomerase.